The primary structure comprises 489 residues: Sphingolipid C9-methyltransferase (489 aa).

The next 2 membrane-spanning stretches (helical) occupy residues 29–49 (GAKN…PLFV) and 59–79 (TFIF…WTVL). S-adenosyl-L-methionine contacts are provided by residues 202–203 (YT), 239–247 (LLDLGCGWG), 265–270 (TLGKNQ), and 295–296 (YR).

It belongs to the CFA/CMAS family.

Its subcellular location is the membrane. It catalyses the reaction a (4E,8E)-4-sphinga-4,8-dienine ceramide + S-adenosyl-L-methionine = a 9-methyl-(4E,8E)-sphinga-4,8-dienine ceramide + S-adenosyl-L-homocysteine + H(+). Its pathway is lipid metabolism; sphingolipid metabolism. Its function is as follows. Catalyzes methylation of the sphingoid base component of glucosylceramides (GluCers) at the C9-position. Sphingolipid C9-methylation requires 4,8-desaturated ceramides as substrates. Glucosylceramides play important roles in growth, differentiation and pathogenicity. The methyl group at the C9-position distinguishes fungal glucosylceramides from those of plants and animals, and may thus play a role in host-pathogen interactions enabling the host to recognize the fungal attack and initiate specific defense responses. This Komagataella phaffii (strain GS115 / ATCC 20864) (Yeast) protein is Sphingolipid C9-methyltransferase.